Consider the following 475-residue polypeptide: Protein nucleotidyltransferase YdiU (475 aa).

Residues G82, G84, R85, K105, D117, G118, R168, and R175 each coordinate ATP. The active-site Proton acceptor is the D240. Mg(2+) contacts are provided by N241 and D250. ATP is bound at residue D250.

This sequence belongs to the SELO family. It depends on Mg(2+) as a cofactor. Requires Mn(2+) as cofactor.

The enzyme catalyses L-seryl-[protein] + ATP = 3-O-(5'-adenylyl)-L-seryl-[protein] + diphosphate. It carries out the reaction L-threonyl-[protein] + ATP = 3-O-(5'-adenylyl)-L-threonyl-[protein] + diphosphate. The catalysed reaction is L-tyrosyl-[protein] + ATP = O-(5'-adenylyl)-L-tyrosyl-[protein] + diphosphate. It catalyses the reaction L-histidyl-[protein] + UTP = N(tele)-(5'-uridylyl)-L-histidyl-[protein] + diphosphate. The enzyme catalyses L-seryl-[protein] + UTP = O-(5'-uridylyl)-L-seryl-[protein] + diphosphate. It carries out the reaction L-tyrosyl-[protein] + UTP = O-(5'-uridylyl)-L-tyrosyl-[protein] + diphosphate. Functionally, nucleotidyltransferase involved in the post-translational modification of proteins. It can catalyze the addition of adenosine monophosphate (AMP) or uridine monophosphate (UMP) to a protein, resulting in modifications known as AMPylation and UMPylation. This is Protein nucleotidyltransferase YdiU from Aeromonas salmonicida (strain A449).